The primary structure comprises 242 residues: 1-(5-phosphoribosyl)-5-[(5-phosphoribosylamino)methylideneamino] imidazole-4-carboxamide isomerase (242 aa).

Residue Asp10 is the Proton acceptor of the active site. Asp132 functions as the Proton donor in the catalytic mechanism.

It belongs to the HisA/HisF family.

The protein resides in the cytoplasm. The catalysed reaction is 1-(5-phospho-beta-D-ribosyl)-5-[(5-phospho-beta-D-ribosylamino)methylideneamino]imidazole-4-carboxamide = 5-[(5-phospho-1-deoxy-D-ribulos-1-ylimino)methylamino]-1-(5-phospho-beta-D-ribosyl)imidazole-4-carboxamide. It functions in the pathway amino-acid biosynthesis; L-histidine biosynthesis; L-histidine from 5-phospho-alpha-D-ribose 1-diphosphate: step 4/9. The chain is 1-(5-phosphoribosyl)-5-[(5-phosphoribosylamino)methylideneamino] imidazole-4-carboxamide isomerase from Methanopyrus kandleri (strain AV19 / DSM 6324 / JCM 9639 / NBRC 100938).